A 46-amino-acid chain; its full sequence is Photosystem II reaction center protein K (46 aa).

Positions 1–9 are excised as a propeptide; it reads MLTLLNTFA. Residues 25 to 45 traverse the membrane as a helical segment; the sequence is LPLIPLFFFLLVFVWQAAVGF.

Belongs to the PsbK family. As to quaternary structure, PSII is composed of 1 copy each of membrane proteins PsbA, PsbB, PsbC, PsbD, PsbE, PsbF, PsbH, PsbI, PsbJ, PsbK, PsbL, PsbM, PsbT, PsbX, PsbY, Psb30/Ycf12, peripheral proteins PsbO, CyanoQ (PsbQ), PsbU, PsbV and a large number of cofactors. It forms dimeric complexes.

Its subcellular location is the cellular thylakoid membrane. One of the components of the core complex of photosystem II (PSII). PSII is a light-driven water:plastoquinone oxidoreductase that uses light energy to abstract electrons from H(2)O, generating O(2) and a proton gradient subsequently used for ATP formation. It consists of a core antenna complex that captures photons, and an electron transfer chain that converts photonic excitation into a charge separation. The sequence is that of Photosystem II reaction center protein K from Prochlorococcus marinus (strain MIT 9515).